The chain runs to 316 residues: Phospholipase A1 3 (316 aa).

Residues 1–4 (ADDL) form the signal peptide. A propeptide spanning residues 5–14 (TTLRNGTLDR) is cleaved from the precursor. A disulfide bridge connects residues Cys-20 and Cys-103. The Nucleophile role is filled by Ser-153. The active-site Charge relay system is the Asp-181. Cystine bridges form between Cys-192–Cys-197 and Cys-235–Cys-240. His-242 (charge relay system) is an active-site residue. 3 disulfides stabilise this stretch: Cys-257-Cys-284, Cys-258-Cys-309, and Cys-277-Cys-282.

The protein belongs to the AB hydrolase superfamily. Lipase family. As to expression, expressed by the venom gland.

Its subcellular location is the secreted. The catalysed reaction is a 1,2-diacyl-sn-glycero-3-phosphocholine + H2O = a 2-acyl-sn-glycero-3-phosphocholine + a fatty acid + H(+). Its function is as follows. Catalyzes the hydrolysis of phosphatidylcholine with phospholipase A1 activity. May act as an allergen and induce hemolytic activity. This Polistes dominula (European paper wasp) protein is Phospholipase A1 3.